The following is an 899-amino-acid chain: DNA mismatch repair protein MutS (899 aa).

Residues 1–20 (MGLQKKTDPEQAQADSAASR) are disordered. 631–638 (GPNMGGKS) lines the ATP pocket. Residues 832–852 (PPTPDDDEDDFGAAPSAVPAP) are disordered. Residues 843–852 (GAAPSAVPAP) show a composition bias toward low complexity.

Belongs to the DNA mismatch repair MutS family.

Functionally, this protein is involved in the repair of mismatches in DNA. It is possible that it carries out the mismatch recognition step. This protein has a weak ATPase activity. This chain is DNA mismatch repair protein MutS, found in Cupriavidus necator (strain ATCC 17699 / DSM 428 / KCTC 22496 / NCIMB 10442 / H16 / Stanier 337) (Ralstonia eutropha).